Here is a 98-residue protein sequence, read N- to C-terminus: NADH-ubiquinone oxidoreductase chain 4L (98 aa).

A run of 3 helical transmembrane segments spans residues 1–21 (MSPV…GLAF), 26–46 (LLSA…AIAL), and 61–81 (MILL…LVAA).

Belongs to the complex I subunit 4L family.

It is found in the mitochondrion membrane. It catalyses the reaction a ubiquinone + NADH + 5 H(+)(in) = a ubiquinol + NAD(+) + 4 H(+)(out). Core subunit of the mitochondrial membrane respiratory chain NADH dehydrogenase (Complex I) which catalyzes electron transfer from NADH through the respiratory chain, using ubiquinone as an electron acceptor. Part of the enzyme membrane arm which is embedded in the lipid bilayer and involved in proton translocation. The sequence is that of NADH-ubiquinone oxidoreductase chain 4L (MT-ND4L) from Squalus acanthias (Spiny dogfish).